Reading from the N-terminus, the 388-residue chain is MNLHEYQGKQLFAEYGLPVSKGYAVDTPEAAAEACDKIGGTEWVVKAQVHAGGRGKAGGVKLVRSKEDAAAFAQQWLGKRLVTYQTDANGQPVTKILVESCTDIAKELYLGAVVDRSSRRIVFMASTEGGVDIEKIAHDTPEKILKATIDPLVGAQPFQGRDLAFQLGLEGKQVTQFAKIFTGLAKLFQDHDLALLEVNPLVIKADGDLHCLDAKINIDANAMYRQPKLKGFHDPSQDDPREAHAAKFELNYVALEGNIGCMVNGAGLAMGTMDIVNLHGGKPANFLDVGGGATKERVTEAFKIILSDTNVAAVLVNIFGGIVRCDMIAEGIIGAVKEVGVKIPVVVRLEGNNAELGAKVLAESGLNIIAATSLTDAAQQVVKAAEGK.

The region spanning 9–244 (KQLFAEYGLP…PSQDDPREAH (236 aa)) is the ATP-grasp domain. ATP is bound by residues lysine 46, 53-55 (GRG), glutamate 99, threonine 102, and glutamate 107. 2 residues coordinate Mg(2+): asparagine 199 and aspartate 213. Residues asparagine 264 and 321 to 323 (GIV) each bind substrate.

It belongs to the succinate/malate CoA ligase beta subunit family. In terms of assembly, heterotetramer of two alpha and two beta subunits. Mg(2+) serves as cofactor.

The catalysed reaction is succinate + ATP + CoA = succinyl-CoA + ADP + phosphate. The enzyme catalyses GTP + succinate + CoA = succinyl-CoA + GDP + phosphate. Its pathway is carbohydrate metabolism; tricarboxylic acid cycle; succinate from succinyl-CoA (ligase route): step 1/1. Succinyl-CoA synthetase functions in the citric acid cycle (TCA), coupling the hydrolysis of succinyl-CoA to the synthesis of either ATP or GTP and thus represents the only step of substrate-level phosphorylation in the TCA. The beta subunit provides nucleotide specificity of the enzyme and binds the substrate succinate, while the binding sites for coenzyme A and phosphate are found in the alpha subunit. This chain is Succinate--CoA ligase [ADP-forming] subunit beta, found in Pseudomonas syringae pv. tomato (strain ATCC BAA-871 / DC3000).